The chain runs to 652 residues: Gametogenetin (652 aa).

Disordered regions lie at residues 1–39 (MGNL…MTSQ), 52–237 (PGSA…DSES), 251–273 (PSLA…GGGG), 291–473 (QGPL…GHKE), and 488–576 (LAAD…GAAN). Composition is skewed to basic and acidic residues over residues 18 to 30 (QPSD…RRTS) and 124 to 133 (RLLEASHRGQ). The interaction with GGNBP1 stretch occupies residues 123–486 (RRLLEASHRG…APTAAPALPP (364 aa)). Composition is skewed to pro residues over residues 138 to 149 (SLRPLKPPPPPR) and 163 to 178 (QFPP…PPLP). The segment covering 201–212 (ESQAGPRNQGQT) has biased composition (polar residues). Low complexity-rich tracts occupy residues 213–230 (AGRA…GEMA), 251–267 (PSLA…AKAS), and 299–312 (ARPL…AQEA). A Phosphoserine modification is found at S389. Positions 407–422 (APALLAPPTFIFPAPT) are enriched in low complexity. 2 stretches are compositionally biased toward pro residues: residues 428 to 466 (RPGP…PPLT) and 495 to 513 (APSP…PVSA). The segment at 491–652 (DQAPAPSPAP…HYDLQATHSN (162 aa)) is interactions with ZNF403/GGNBP2 and OAZ3. The segment covering 523–532 (TRTRRNKGSR) has biased composition (basic residues). Over residues 538-552 (TRKDGLHGDGPRERA) the composition is skewed to basic and acidic residues.

As to quaternary structure, interacts with FANCL, GGNBP1 and ZNF403/GGNBP2.

Functionally, may be involved in spermatogenesis. The sequence is that of Gametogenetin (GGN) from Homo sapiens (Human).